The chain runs to 179 residues: Large ribosomal subunit protein uL5 (179 aa).

This sequence belongs to the universal ribosomal protein uL5 family. In terms of assembly, part of the 50S ribosomal subunit; part of the 5S rRNA/L5/L18/L25 subcomplex. Contacts the 5S rRNA and the P site tRNA. Forms a bridge to the 30S subunit in the 70S ribosome.

This is one of the proteins that bind and probably mediate the attachment of the 5S RNA into the large ribosomal subunit, where it forms part of the central protuberance. In the 70S ribosome it contacts protein S13 of the 30S subunit (bridge B1b), connecting the 2 subunits; this bridge is implicated in subunit movement. Contacts the P site tRNA; the 5S rRNA and some of its associated proteins might help stabilize positioning of ribosome-bound tRNAs. The chain is Large ribosomal subunit protein uL5 from Shewanella oneidensis (strain ATCC 700550 / JCM 31522 / CIP 106686 / LMG 19005 / NCIMB 14063 / MR-1).